A 191-amino-acid polypeptide reads, in one-letter code: Flavin reductase (NADH) (191 aa).

46-52 (YGLTCSA) contributes to the FAD binding site. Ser-55 contacts NAD(+). 72 to 73 (RV) lines the FAD pocket. Residues His-144 and 166 to 169 (YWRR) contribute to the NAD(+) site.

This sequence belongs to the non-flavoprotein flavin reductase family.

The catalysed reaction is a reduced flavin + NAD(+) = an oxidized flavin + NADH + 2 H(+). Functionally, catalyzes the reduction of flavin by NADH. Subsequently, the reduced flavins is transferred to the tetracycline 7-halogenase CtcP. The protein is Flavin reductase (NADH) of Kitasatospora aureofaciens (Streptomyces aureofaciens).